The following is a 150-amino-acid chain: NADH-quinone oxidoreductase subunit A (150 aa).

3 consecutive transmembrane segments (helical) span residues phenylalanine 14–phenylalanine 34, phenylalanine 66–tryptophan 86, and isoleucine 96–valine 116.

It belongs to the complex I subunit 3 family. In terms of assembly, NDH-1 is composed of 13 different subunits. Subunits NuoA, H, J, K, L, M, N constitute the membrane sector of the complex.

Its subcellular location is the cell inner membrane. It catalyses the reaction a quinone + NADH + 5 H(+)(in) = a quinol + NAD(+) + 4 H(+)(out). Its function is as follows. NDH-1 shuttles electrons from NADH, via FMN and iron-sulfur (Fe-S) centers, to quinones in the respiratory chain. The immediate electron acceptor for the enzyme in this species is believed to be ubiquinone. Couples the redox reaction to proton translocation (for every two electrons transferred, four hydrogen ions are translocated across the cytoplasmic membrane), and thus conserves the redox energy in a proton gradient. This Yersinia enterocolitica serotype O:8 / biotype 1B (strain NCTC 13174 / 8081) protein is NADH-quinone oxidoreductase subunit A.